Reading from the N-terminus, the 497-residue chain is Trichoplein keratin filament-binding protein (497 aa).

Coiled-coil stretches lie at residues 67–140 (HCEK…LLYE), 166–271 (ATQK…ELGR), and 327–479 (MKQV…AKTM). Residues 72–457 (KEEKRKILEL…WEAARQEEEE (386 aa)) are interaction with keratin proteins. Residues 167–188 (TQKEEKKQQEATEKQENKRLEN) form a disordered region. Over residues 168-188 (QKEEKKQQEATEKQENKRLEN) the composition is skewed to basic and acidic residues. The trichohyalin/plectin homology domain stretch occupies residues 258-424 (RQMAALRRKT…KQLAQRAKEE (167 aa)). Positions 441-497 (AERQGQEWEAARQEEEEEEEARQAEEHSNALLQQEAKTMAEKGYQPKLHGHLRIAWD) are disordered. Basic and acidic residues predominate over residues 444–453 (QGQEWEAARQ). Residues 488-497 (LHGHLRIAWD) show a composition bias toward basic residues.

It belongs to the TCHP family. In terms of assembly, interacts specifically with keratin proteins including, KRT5, KRT6A, KRT8, KRT14, KRT16 and KRT18. Interacts with KCTD17. Ubiquitinated. Ubiquitination by the BCR(KCTD17) E3 ubiquitin ligase complex results in proteasomal degradation, and induces ciliogenesis. In terms of tissue distribution, expressed in all tissues examined, including brain, liver, small intestine, large intestine, lung and heart. Found concentrated in tubular structures within hepatocytes, and in the apical cortical region and desmosomes of the apical junctional domain in enterocytes of the small intestine. In the hair follicle, localized at the outer root sheath. Also expressed in blood vessels (at protein level).

Its subcellular location is the cytoplasm. It is found in the cytoskeleton. It localises to the cell membrane. The protein resides in the mitochondrion. The protein localises to the microtubule organizing center. Its subcellular location is the centrosome. Its function is as follows. Tumor suppressor which has the ability to inhibit cell growth and be pro-apoptotic during cell stress. May act as a 'capping' or 'branching' protein for keratin filaments in the cell periphery. May regulate K8/K18 filament and desmosome organization mainly at the apical or peripheral regions of simple epithelial cells. Is a negative regulator of ciliogenesis. This Mus musculus (Mouse) protein is Trichoplein keratin filament-binding protein.